The sequence spans 126 residues: Holo-[acyl-carrier-protein] synthase (126 aa).

Asp8 and Glu60 together coordinate Mg(2+).

The protein belongs to the P-Pant transferase superfamily. AcpS family. It depends on Mg(2+) as a cofactor.

It localises to the cytoplasm. The enzyme catalyses apo-[ACP] + CoA = holo-[ACP] + adenosine 3',5'-bisphosphate + H(+). Its function is as follows. Transfers the 4'-phosphopantetheine moiety from coenzyme A to a Ser of acyl-carrier-protein. This Ehrlichia canis (strain Jake) protein is Holo-[acyl-carrier-protein] synthase.